The following is a 448-amino-acid chain: Tubulin beta-2 chain (448 aa).

Residues Gln11, Glu69, Ser138, Gly142, Thr143, Gly144, Asn204, and Asn226 each coordinate GTP. Glu69 contacts Mg(2+). The interval Thr429–Ala448 is disordered.

It belongs to the tubulin family. As to quaternary structure, dimer of alpha and beta chains. A typical microtubule is a hollow water-filled tube with an outer diameter of 25 nm and an inner diameter of 15 nM. Alpha-beta heterodimers associate head-to-tail to form protofilaments running lengthwise along the microtubule wall with the beta-tubulin subunit facing the microtubule plus end conferring a structural polarity. Microtubules usually have 13 protofilaments but different protofilament numbers can be found in some organisms and specialized cells. The cofactor is Mg(2+).

Its subcellular location is the cytoplasm. The protein localises to the cytoskeleton. Its function is as follows. Tubulin is the major constituent of microtubules, a cylinder consisting of laterally associated linear protofilaments composed of alpha- and beta-tubulin heterodimers. Microtubules grow by the addition of GTP-tubulin dimers to the microtubule end, where a stabilizing cap forms. Below the cap, tubulin dimers are in GDP-bound state, owing to GTPase activity of alpha-tubulin. The protein is Tubulin beta-2 chain (TUBB2) of Lupinus albus (White lupine).